Reading from the N-terminus, the 534-residue chain is Chaperonin GroEL (534 aa).

ATP-binding positions include 29-32 (TAGP), 86-90 (DGTTT), G413, and D494.

The protein belongs to the chaperonin (HSP60) family. Forms a cylinder of 14 subunits composed of two heptameric rings stacked back-to-back. Interacts with the co-chaperonin GroES.

It is found in the cytoplasm. It catalyses the reaction ATP + H2O + a folded polypeptide = ADP + phosphate + an unfolded polypeptide.. Its function is as follows. Together with its co-chaperonin GroES, plays an essential role in assisting protein folding. The GroEL-GroES system forms a nano-cage that allows encapsulation of the non-native substrate proteins and provides a physical environment optimized to promote and accelerate protein folding. This Mycoplasmoides gallisepticum (strain R(low / passage 15 / clone 2)) (Mycoplasma gallisepticum) protein is Chaperonin GroEL.